The sequence spans 195 residues: Pyridoxal 5'-phosphate synthase subunit PdxT (195 aa).

46–48 serves as a coordination point for L-glutamine; the sequence is GES. The active-site Nucleophile is Cys78. Residues Arg105 and 133-134 each bind L-glutamine; that span reads IR. Catalysis depends on charge relay system residues His169 and Glu171.

The protein belongs to the glutaminase PdxT/SNO family. In the presence of PdxS, forms a dodecamer of heterodimers. Only shows activity in the heterodimer.

The catalysed reaction is aldehydo-D-ribose 5-phosphate + D-glyceraldehyde 3-phosphate + L-glutamine = pyridoxal 5'-phosphate + L-glutamate + phosphate + 3 H2O + H(+). It catalyses the reaction L-glutamine + H2O = L-glutamate + NH4(+). It functions in the pathway cofactor biosynthesis; pyridoxal 5'-phosphate biosynthesis. Its function is as follows. Catalyzes the hydrolysis of glutamine to glutamate and ammonia as part of the biosynthesis of pyridoxal 5'-phosphate. The resulting ammonia molecule is channeled to the active site of PdxS. This is Pyridoxal 5'-phosphate synthase subunit PdxT from Geobacillus thermodenitrificans (strain NG80-2).